A 202-amino-acid chain; its full sequence is Holliday junction resolvase RecU (202 aa).

The Mg(2+) site is built by Thr-85, Asp-87, Glu-100, and Gln-119.

Belongs to the RecU family. Mg(2+) serves as cofactor.

Its subcellular location is the cytoplasm. The enzyme catalyses Endonucleolytic cleavage at a junction such as a reciprocal single-stranded crossover between two homologous DNA duplexes (Holliday junction).. Its function is as follows. Endonuclease that resolves Holliday junction intermediates in genetic recombination. Cleaves mobile four-strand junctions by introducing symmetrical nicks in paired strands. Promotes annealing of linear ssDNA with homologous dsDNA. Required for DNA repair, homologous recombination and chromosome segregation. This Streptococcus equi subsp. equi (strain 4047) protein is Holliday junction resolvase RecU.